The chain runs to 157 residues: 6,7-dimethyl-8-ribityllumazine synthase 1 (157 aa).

Residues Phe-22, 53 to 55 (ALE), and 82 to 84 (TVI) contribute to the 5-amino-6-(D-ribitylamino)uracil site. 87–88 (ET) lines the (2S)-2-hydroxy-3-oxobutyl phosphate pocket. His-90 functions as the Proton donor in the catalytic mechanism. 5-amino-6-(D-ribitylamino)uracil is bound at residue Asn-115. Arg-129 contributes to the (2S)-2-hydroxy-3-oxobutyl phosphate binding site.

Belongs to the DMRL synthase family. Homopentamer.

The catalysed reaction is (2S)-2-hydroxy-3-oxobutyl phosphate + 5-amino-6-(D-ribitylamino)uracil = 6,7-dimethyl-8-(1-D-ribityl)lumazine + phosphate + 2 H2O + H(+). It participates in cofactor biosynthesis; riboflavin biosynthesis; riboflavin from 2-hydroxy-3-oxobutyl phosphate and 5-amino-6-(D-ribitylamino)uracil: step 1/2. Its function is as follows. Catalyzes the formation of 6,7-dimethyl-8-ribityllumazine by condensation of 5-amino-6-(D-ribitylamino)uracil with 3,4-dihydroxy-2-butanone 4-phosphate. This is the penultimate step in the biosynthesis of riboflavin. This is 6,7-dimethyl-8-ribityllumazine synthase 1 (ribH1) from Brucella melitensis biotype 1 (strain ATCC 23456 / CCUG 17765 / NCTC 10094 / 16M).